Here is a 338-residue protein sequence, read N- to C-terminus: D-erythrose-4-phosphate dehydrogenase (338 aa).

11–12 (RI) is a binding site for NAD(+). Residues 153–155 (SCT), arginine 199, 212–213 (TK), and arginine 235 contribute to the substrate site. Residue cysteine 154 is the Nucleophile of the active site. An NAD(+)-binding site is contributed by asparagine 317.

The protein belongs to the glyceraldehyde-3-phosphate dehydrogenase family. Epd subfamily. As to quaternary structure, homotetramer.

It localises to the cytoplasm. It carries out the reaction D-erythrose 4-phosphate + NAD(+) + H2O = 4-phospho-D-erythronate + NADH + 2 H(+). The protein operates within cofactor biosynthesis; pyridoxine 5'-phosphate biosynthesis; pyridoxine 5'-phosphate from D-erythrose 4-phosphate: step 1/5. Functionally, catalyzes the NAD-dependent conversion of D-erythrose 4-phosphate to 4-phosphoerythronate. This Shewanella baltica (strain OS223) protein is D-erythrose-4-phosphate dehydrogenase.